We begin with the raw amino-acid sequence, 161 residues long: SsrA-binding protein (161 aa).

The disordered stretch occupies residues 1–23 (MATKKNEQIKGRTDGLVAENRRS).

It belongs to the SmpB family.

The protein resides in the cytoplasm. Its function is as follows. Required for rescue of stalled ribosomes mediated by trans-translation. Binds to transfer-messenger RNA (tmRNA), required for stable association of tmRNA with ribosomes. tmRNA and SmpB together mimic tRNA shape, replacing the anticodon stem-loop with SmpB. tmRNA is encoded by the ssrA gene; the 2 termini fold to resemble tRNA(Ala) and it encodes a 'tag peptide', a short internal open reading frame. During trans-translation Ala-aminoacylated tmRNA acts like a tRNA, entering the A-site of stalled ribosomes, displacing the stalled mRNA. The ribosome then switches to translate the ORF on the tmRNA; the nascent peptide is terminated with the 'tag peptide' encoded by the tmRNA and targeted for degradation. The ribosome is freed to recommence translation, which seems to be the essential function of trans-translation. The protein is SsrA-binding protein of Hyphomonas neptunium (strain ATCC 15444).